Here is a 79-residue protein sequence, read N- to C-terminus: Centromere protein X (79 aa).

Residue methionine 1 is modified to N-acetylmethionine.

Belongs to the CENP-X/MHF2 family. In terms of assembly, heterodimer with CENPX, sometimes called MHF; this interaction stabilizes both partners. MHF heterodimers can assemble to form tetrameric structures. MHF also coassemble with CENPT-CENPW heterodimers at centromeres to form the tetrameric CENP-T-W-S-X complex. Forms a discrete complex with FANCM and CENPX, called FANCM-MHF; this interaction, probably mediated by direct binding between CENPS and FANCM, leads to synergistic activation of double-stranded DNA binding and strongly stimulates FANCM-mediated DNA remodeling. Recruited by FANCM to the Fanconi anemia (FA) core complex, which consists of CENPS, CENPX, FANCA, FANCB, FANCC, FANCE, FANCF, FANCG, FANCL, FANCM, FAAP24 and FAAP100. The FA core complex associates with Bloom syndrome (BLM) complex, which consists of at least BLM, DNA topoisomerase 3-alpha (TOP3A), RMI1/BLAP75, RPA1/RPA70 and RPA2/RPA32. The super complex between FA and BLM is called BRAFT.

It is found in the nucleus. The protein resides in the chromosome. Its subcellular location is the centromere. It localises to the kinetochore. DNA-binding component of the Fanconi anemia (FA) core complex. Required for the normal activation of the FA pathway, leading to monoubiquitination of the FANCI-FANCD2 complex in response to DNA damage, cellular resistance to DNA cross-linking drugs, and prevention of chromosomal breakage. In complex with CENPS (MHF heterodimer), crucial cofactor for FANCM in both binding and ATP-dependent remodeling of DNA. Stabilizes FANCM. In complex with CENPS and FANCM (but not other FANC proteins), rapidly recruited to blocked forks and promotes gene conversion at blocked replication forks. In complex with CENPS, CENPT and CENPW (CENP-T-W-S-X heterotetramer), involved in the formation of a functional kinetochore outer plate, which is essential for kinetochore-microtubule attachment and faithful mitotic progression. As a component of MHF and CENP-T-W-S-X complexes, binds DNA and bends it to form a nucleosome-like structure. DNA-binding function is fulfilled in the presence of CENPS, with the following preference for DNA substates: Holliday junction &gt; double-stranded &gt; splay arm &gt; single-stranded. Does not bind DNA on its own. The sequence is that of Centromere protein X (CENPX) from Bos taurus (Bovine).